A 195-amino-acid chain; its full sequence is Ribonuclease HII (195 aa).

The 190-residue stretch at S6 to N195 folds into the RNase H type-2 domain. The a divalent metal cation site is built by D12, E13, and D108.

The protein belongs to the RNase HII family. Mn(2+) serves as cofactor. Requires Mg(2+) as cofactor.

The protein localises to the cytoplasm. The catalysed reaction is Endonucleolytic cleavage to 5'-phosphomonoester.. Its function is as follows. Endonuclease that specifically degrades the RNA of RNA-DNA hybrids. In Prochlorococcus marinus (strain NATL2A), this protein is Ribonuclease HII.